The following is a 471-amino-acid chain: Extracellular endo-alpha-(1-&gt;5)-L-arabinanase (471 aa).

The N-terminal stretch at 1–19 is a signal peptide; it reads MRFLFLMITLTALTGYILA. The active-site Proton acceptor is aspartate 32. Residues aspartate 32, glycine 117, 167 to 170, 187 to 189, and 219 to 223 each bind substrate; these read NALD, SWF, and HSSME. The Proton donor role is filled by glutamate 223. Histidine 314 contributes to the Ca(2+) binding site.

It belongs to the glycosyl hydrolase 43 family. Monomer. It depends on Ca(2+) as a cofactor.

The protein resides in the secreted. The catalysed reaction is Endohydrolysis of (1-&gt;5)-alpha-arabinofuranosidic linkages in (1-&gt;5)-arabinans.. It participates in glycan metabolism; L-arabinan degradation. In terms of biological role, involved in the degradation of arabinan and is a key enzyme in the complete degradation of the plant cell wall. Catalyzes the internal cleavage of alpha-(1-&gt;5)-L-arabinofuranosyl residues in different arabinan-containing polysaccharides, and releases arabinotriose and arabinobiose as end products. It acts on branched arabinan (from sugar beet), but more slowly when compared to linear or debranched arabinan. This is Extracellular endo-alpha-(1-&gt;5)-L-arabinanase from Thermotoga petrophila (strain ATCC BAA-488 / DSM 13995 / JCM 10881 / RKU-1).